A 423-amino-acid polypeptide reads, in one-letter code: MQYKDENGVNEPSRRRLLKGIGALALAGSCPVAHAQKTQSAPGTLSPDARNEKQPFYGEHQAGILTPQQAAMMLVAFDVLASDKADLERLFRLLTQRFAFLTQGGAAPETPNPRLPPLDSGILGGYIAPDNLTITLSVGHSLFDERFGLAPQMPKKLQKMTRFPNDSLDAALCHGDVLLQICANTQDTVIHALRDIIKHTPDLLSVRWKREGFISDHVSRSKGKETPINLLGFKDGTANPDSQNDKLMQKVVWVTADQQEPAWTIGGSYQAVRLIQFRVEFWDRTPLKEQQTIFGRDKQTGAPLGMQHEHDVPDYASDPEGKVIALDSHIRLANPRTAESESSLMLRRGYSYSLGVTNSGQLDMGLLFVCYQHDLEKGFLTVQKRLNGEALEEYVKPIGGGYFFSLPGVKDANDYLGSALLRV.

Residues 1–35 constitute a signal peptide (tat-type signal); it reads MQYKDENGVNEPSRRRLLKGIGALALAGSCPVAHA. Residues 236–238, His329, 334–336, and Arg347 contribute to the heme b site; these read GTA and NPR.

Belongs to the DyP-type peroxidase family. EfeB subfamily. In terms of assembly, homodimer. Part of a ferrous iron transporter composed of EfeU, EfeO and EfeB. Heme b is required as a cofactor. Predicted to be exported by the Tat system. The position of the signal peptide cleavage has not been experimentally proven.

It is found in the periplasm. It catalyses the reaction heme b + 2 H(+) = protoporphyrin IX + Fe(2+). Its function is as follows. Involved in the recovery of exogenous heme iron. Extracts iron from heme while preserving the protoporphyrin ring intact. The sequence is that of Deferrochelatase (efeB) from Shigella sonnei (strain Ss046).